The following is a 192-amino-acid chain: MDLIFTSVLIGIGLAMDCLAVSFAVGAHQKTSRIRAAFILALFFGGFQGGMTLLGWLLGSGFADAIAAYDHWVAAGLLFIIGGKMVLDGIKDGHEEEAPDVFNFVAVFILAVATSIDALAVGLSFSLLHIVPLIPALIIGLISAIFSVGGVYSGGKIGHILGKRVDILGGVILTLIGIRILLEHLVWNGAGA.

6 consecutive transmembrane segments (helical) span residues 3–23 (LIFTSVLIGIGLAMDCLAVSF), 38–58 (FILALFFGGFQGGMTLLGWLL), 61–81 (GFADAIAAYDHWVAAGLLFII), 101–121 (VFNFVAVFILAVATSIDALAV), 130–150 (IVPLIPALIIGLISAIFSVGG), and 167–187 (ILGGVILTLIGIRILLEHLVW).

It belongs to the MntP (TC 9.B.29) family.

The protein resides in the cell membrane. In terms of biological role, probably functions as a manganese efflux pump. The polypeptide is Putative manganese efflux pump MntP (Methanospirillum hungatei JF-1 (strain ATCC 27890 / DSM 864 / NBRC 100397 / JF-1)).